Consider the following 144-residue polypeptide: Putative HTH-type transcriptional regulator aq_268 (144 aa).

An HTH rrf2-type domain is found at 2–133 (IFSDTVRYAL…KGTTIKDLIN (132 aa)).

In Aquifex aeolicus (strain VF5), this protein is Putative HTH-type transcriptional regulator aq_268.